The chain runs to 109 residues: Somatostatin-2 (109 aa).

A signal peptide spans 1–16 (MQFLASLVSFLLVVWS). The propeptide occupies 17–80 (VKATALPVED…EPLENKLEER (64 aa)). An intrachain disulfide couples C98 to C109.

The protein belongs to the somatostatin family.

The protein resides in the secreted. Somatostatin inhibits the release of somatotropin. The chain is Somatostatin-2 (sst2) from Protopterus annectens (African lungfish).